Here is a 99-residue protein sequence, read N- to C-terminus: MKTQMKKPWIEYELMWLIRPDLNQEEIKKEIEAVMKVLEESRRVQLNGKTTRKLAYKIGKYEEGHYVQMEFDGYGRIVKKLEKYLQVNEKGLRYMILRK.

Belongs to the bacterial ribosomal protein bS6 family.

Its subcellular location is the plastid. It is found in the chloroplast. Binds together with bS18 to 16S ribosomal RNA. The polypeptide is Small ribosomal subunit protein bS6c (Cyanidioschyzon merolae (strain NIES-3377 / 10D) (Unicellular red alga)).